A 417-amino-acid polypeptide reads, in one-letter code: D-amino acid dehydrogenase (417 aa).

Residue 3–17 (AVVLGSGVVGLMSAW) coordinates FAD.

This sequence belongs to the DadA oxidoreductase family. The cofactor is FAD.

The catalysed reaction is a D-alpha-amino acid + A + H2O = a 2-oxocarboxylate + AH2 + NH4(+). Functionally, oxidative deamination of D-amino acids. This chain is D-amino acid dehydrogenase, found in Vibrio vulnificus (strain CMCP6).